A 750-amino-acid chain; its full sequence is von Willebrand factor A domain-containing protein DDB_G0292188 (750 aa).

The VWFA domain occupies 17–249 (EIKTVFNSDS…IKDDLLLDVV (233 aa)). Low complexity-rich tracts occupy residues 586–595 (SINDNNNSFN) and 603–645 (PFFE…SSAS). The segment at 586–657 (SINDNNNSFN…PPPSQMLNEQ (72 aa)) is disordered.

The sequence is that of von Willebrand factor A domain-containing protein DDB_G0292188 from Dictyostelium discoideum (Social amoeba).